A 428-amino-acid polypeptide reads, in one-letter code: D-amino acid dehydrogenase (428 aa).

3–17 (VVILGSGVVGVASAY) is an FAD binding site.

It belongs to the DadA oxidoreductase family. FAD is required as a cofactor.

The enzyme catalyses a D-alpha-amino acid + A + H2O = a 2-oxocarboxylate + AH2 + NH4(+). Its pathway is amino-acid degradation; D-alanine degradation; NH(3) and pyruvate from D-alanine: step 1/1. Its function is as follows. Oxidative deamination of D-amino acids. This chain is D-amino acid dehydrogenase, found in Burkholderia multivorans (strain ATCC 17616 / 249).